A 215-amino-acid chain; its full sequence is ATP phosphoribosyltransferase (215 aa).

Belongs to the ATP phosphoribosyltransferase family. Short subfamily. As to quaternary structure, heteromultimer composed of HisG and HisZ subunits.

It localises to the cytoplasm. It catalyses the reaction 1-(5-phospho-beta-D-ribosyl)-ATP + diphosphate = 5-phospho-alpha-D-ribose 1-diphosphate + ATP. Its pathway is amino-acid biosynthesis; L-histidine biosynthesis; L-histidine from 5-phospho-alpha-D-ribose 1-diphosphate: step 1/9. Functionally, catalyzes the condensation of ATP and 5-phosphoribose 1-diphosphate to form N'-(5'-phosphoribosyl)-ATP (PR-ATP). Has a crucial role in the pathway because the rate of histidine biosynthesis seems to be controlled primarily by regulation of HisG enzymatic activity. The sequence is that of ATP phosphoribosyltransferase from Lachnoclostridium phytofermentans (strain ATCC 700394 / DSM 18823 / ISDg) (Clostridium phytofermentans).